A 250-amino-acid polypeptide reads, in one-letter code: 3-deoxy-manno-octulosonate cytidylyltransferase (250 aa).

This sequence belongs to the KdsB family.

Its subcellular location is the cytoplasm. It catalyses the reaction 3-deoxy-alpha-D-manno-oct-2-ulosonate + CTP = CMP-3-deoxy-beta-D-manno-octulosonate + diphosphate. It functions in the pathway nucleotide-sugar biosynthesis; CMP-3-deoxy-D-manno-octulosonate biosynthesis; CMP-3-deoxy-D-manno-octulosonate from 3-deoxy-D-manno-octulosonate and CTP: step 1/1. The protein operates within bacterial outer membrane biogenesis; lipopolysaccharide biosynthesis. In terms of biological role, activates KDO (a required 8-carbon sugar) for incorporation into bacterial lipopolysaccharide in Gram-negative bacteria. This is 3-deoxy-manno-octulosonate cytidylyltransferase from Francisella philomiragia subsp. philomiragia (strain ATCC 25017 / CCUG 19701 / FSC 153 / O#319-036).